A 254-amino-acid chain; its full sequence is 3-deoxy-manno-octulosonate cytidylyltransferase (254 aa).

It belongs to the KdsB family.

Its subcellular location is the cytoplasm. It carries out the reaction 3-deoxy-alpha-D-manno-oct-2-ulosonate + CTP = CMP-3-deoxy-beta-D-manno-octulosonate + diphosphate. The protein operates within nucleotide-sugar biosynthesis; CMP-3-deoxy-D-manno-octulosonate biosynthesis; CMP-3-deoxy-D-manno-octulosonate from 3-deoxy-D-manno-octulosonate and CTP: step 1/1. Its pathway is bacterial outer membrane biogenesis; lipopolysaccharide biosynthesis. Its function is as follows. Activates KDO (a required 8-carbon sugar) for incorporation into bacterial lipopolysaccharide in Gram-negative bacteria. This chain is 3-deoxy-manno-octulosonate cytidylyltransferase, found in Haemophilus influenzae (strain PittGG).